The chain runs to 115 residues: NADH-ubiquinone oxidoreductase chain 3 (115 aa).

3 helical membrane passes run 3–23 (IMIT…IAFW), 55–75 (FFLV…LLPL), and 87–107 (MLTT…YEWL).

Belongs to the complex I subunit 3 family. In terms of assembly, core subunit of respiratory chain NADH dehydrogenase (Complex I) which is composed of 45 different subunits. Interacts with TMEM186. Interacts with TMEM242.

It localises to the mitochondrion inner membrane. The enzyme catalyses a ubiquinone + NADH + 5 H(+)(in) = a ubiquinol + NAD(+) + 4 H(+)(out). Functionally, core subunit of the mitochondrial membrane respiratory chain NADH dehydrogenase (Complex I) which catalyzes electron transfer from NADH through the respiratory chain, using ubiquinone as an electron acceptor. Essential for the catalytic activity of complex I. The polypeptide is NADH-ubiquinone oxidoreductase chain 3 (Dasypus novemcinctus (Nine-banded armadillo)).